A 90-amino-acid polypeptide reads, in one-letter code: Cell division topological specificity factor (90 aa).

The interval 1–21 (MAGFWSKLFSSEEKPSSAQTA) is disordered. Residues 10–21 (SSEEKPSSAQTA) show a composition bias toward basic and acidic residues.

Belongs to the MinE family.

Functionally, prevents the cell division inhibition by proteins MinC and MinD at internal division sites while permitting inhibition at polar sites. This ensures cell division at the proper site by restricting the formation of a division septum at the midpoint of the long axis of the cell. In Acinetobacter baumannii (strain AB307-0294), this protein is Cell division topological specificity factor.